Reading from the N-terminus, the 740-residue chain is Ion-translocating oxidoreductase complex subunit C (740 aa).

4Fe-4S ferredoxin-type domains are found at residues 369–397 and 407–436; these read GEPQ…QQLY and KATT…VQYF. Positions 377, 380, 383, 387, 416, 419, 422, and 426 each coordinate [4Fe-4S] cluster. The interval 602–718 is disordered; that stretch reads KLEQQQANAE…EEQVDPRKAA (117 aa).

The protein belongs to the 4Fe4S bacterial-type ferredoxin family. RnfC subfamily. The complex is composed of six subunits: RsxA, RsxB, RsxC, RsxD, RsxE and RsxG. The cofactor is [4Fe-4S] cluster.

The protein resides in the cell inner membrane. In terms of biological role, part of a membrane-bound complex that couples electron transfer with translocation of ions across the membrane. Required to maintain the reduced state of SoxR. This chain is Ion-translocating oxidoreductase complex subunit C, found in Shigella sonnei (strain Ss046).